We begin with the raw amino-acid sequence, 67 residues long: uncharacterized protein (67 aa).

This is an uncharacterized protein from Rickettsia prowazekii (strain Madrid E).